Here is a 294-residue protein sequence, read N- to C-terminus: ATP synthase gamma chain (294 aa).

It belongs to the ATPase gamma chain family. In terms of assembly, F-type ATPases have 2 components, CF(1) - the catalytic core - and CF(0) - the membrane proton channel. CF(1) has five subunits: alpha(3), beta(3), gamma(1), delta(1), epsilon(1). CF(0) has three main subunits: a, b and c.

It localises to the cell membrane. Produces ATP from ADP in the presence of a proton gradient across the membrane. The gamma chain is believed to be important in regulating ATPase activity and the flow of protons through the CF(0) complex. The chain is ATP synthase gamma chain from Opitutus terrae (strain DSM 11246 / JCM 15787 / PB90-1).